Consider the following 401-residue polypeptide: Bone morphogenetic protein 4 (401 aa).

The signal sequence occupies residues 1-19; the sequence is MIPGNRMLMVILLSQVLLG. Positions 20 to 287 are excised as a propeptide; that stretch reads GTNYASLIPD…GHALTRRSKR (268 aa). 3 N-linked (GlcNAc...) asparagine glycosylation sites follow: Asn-141, Asn-204, and Asn-238. The segment at 279–299 is disordered; sequence HALTRRSKRSPKQQRPRKKNK. Over residues 280–299 the composition is skewed to basic residues; sequence ALTRRSKRSPKQQRPRKKNK. 3 disulfides stabilise this stretch: Cys-301/Cys-366, Cys-330/Cys-398, and Cys-334/Cys-400. Asn-343 and Asn-358 each carry an N-linked (GlcNAc...) asparagine glycan.

This sequence belongs to the TGF-beta family. In terms of assembly, homodimer; disulfide-linked. Forms heterodimers with the TGF-beta family member derriere. Part of a complex consisting of twsg1 and chrd. Interacts with tsku.

It is found in the secreted. Its subcellular location is the extracellular space. The protein localises to the extracellular matrix. Its function is as follows. Posterior-ventralizing factor in Xenopus mesoderm induction. Induces posteroventral mesoderm and counteracts dorsalizing signals such as activin. In Xenopus laevis (African clawed frog), this protein is Bone morphogenetic protein 4 (bmp4).